Reading from the N-terminus, the 204-residue chain is dITP/XTP pyrophosphatase (204 aa).

11 to 16 (SRNRKK) provides a ligand contact to substrate. The active-site Proton acceptor is the aspartate 76. Position 76 (aspartate 76) interacts with Mg(2+). Residues serine 77, 158–161 (FGYD), lysine 181, and 186–187 (HR) contribute to the substrate site.

It belongs to the HAM1 NTPase family. In terms of assembly, homodimer. Mg(2+) is required as a cofactor.

The enzyme catalyses XTP + H2O = XMP + diphosphate + H(+). It carries out the reaction dITP + H2O = dIMP + diphosphate + H(+). It catalyses the reaction ITP + H2O = IMP + diphosphate + H(+). In terms of biological role, pyrophosphatase that catalyzes the hydrolysis of nucleoside triphosphates to their monophosphate derivatives, with a high preference for the non-canonical purine nucleotides XTP (xanthosine triphosphate), dITP (deoxyinosine triphosphate) and ITP. Seems to function as a house-cleaning enzyme that removes non-canonical purine nucleotides from the nucleotide pool, thus preventing their incorporation into DNA/RNA and avoiding chromosomal lesions. This Mycobacterium tuberculosis (strain CDC 1551 / Oshkosh) protein is dITP/XTP pyrophosphatase.